The following is a 97-amino-acid chain: Anti-sigma-YlaC factor YlaD (97 aa).

Zn(2+)-binding residues include His29, Cys33, and Cys36. A helical transmembrane segment spans residues 71–93 (YYGLLIMKAACWFGAAVAMMLII).

This sequence belongs to the zinc-associated anti-sigma factor (ZAS) superfamily. Requires Zn(2+) as cofactor.

It localises to the cell membrane. Anti-sigma factor for YlaC. This is Anti-sigma-YlaC factor YlaD (ylaD) from Bacillus subtilis (strain 168).